We begin with the raw amino-acid sequence, 318 residues long: MLSAHRPAEPPAVEGCEPPRKERQGGLLPPDDRHDSGLDSMKEEEYRQLVRELEDIRLQPREPPARPHAWAQQLTEDGDTFLHLAIIHEEKALSLEVIRQAAGDAAFLNFQNNLSQTPLHLAVITDQAEIAEHLLKAGCDLDVRDFRGNTPLHIACQQGSLRSVSVLTQHCQPHHLLAVLQATNYNGHTCLHLASIQGYLAVVEYLLSLGADVNAQEPCNGRTALHLAVDLQNSDLVSLLVKHGPDVNKVTYQGYSPYQLTWGRDNASIQEQLKLLTTADLQILPESEDEESSESEPEFTEDELMYDDCCIGGRQLTF.

Positions 1–44 (MLSAHRPAEPPAVEGCEPPRKERQGGLLPPDDRHDSGLDSMKEE) are disordered. Residues 17–44 (EPPRKERQGGLLPPDDRHDSGLDSMKEE) show a composition bias toward basic and acidic residues. Residue K21 forms a Glycyl lysine isopeptide (Lys-Gly) (interchain with G-Cter in ubiquitin) linkage. At S36 the chain carries Phosphoserine; by IKKA and IKKB. At S40 the chain carries Phosphoserine; by IKKA, IKKB and IKKE. Residue Y46 is modified to Phosphotyrosine; by Tyr-kinases. ANK repeat units follow at residues 114 to 143 (LSQT…DLDV), 147 to 176 (RGNT…PHHL), 186 to 215 (NGHT…DVNA), and 220 to 249 (NGRT…DVNK).

It belongs to the NF-kappa-B inhibitor family. In terms of processing, phosphorylated at Ser-36 and Ser-40 by IKKA/CHUK and IKKB/IKBKB; disables inhibition of NF-kappa-B DNA-binding activity. Phosphorylation at positions 36 and 40 is prerequisite to polyubiquitination and subsequent degradation. Monoubiquitinated at Lys-21 following phosphorylation at Ser-36 and Ser-40. The resulting polyubiquitination leads to protein degradation. Post-translationally, hydroxylated by HIF1AN. Highly expressed in lymph node, thymus followed by liver, brain, muscle, kidney, gastrointestinal and reproductive tract.

Its subcellular location is the cytoplasm. The protein localises to the nucleus. Inhibits the activity of dimeric NF-kappa-B/REL complexes by trapping REL (RELA/p65 and NFKB1/p50) dimers in the cytoplasm by masking their nuclear localization signals. On cellular stimulation by immune and pro-inflammatory responses, becomes phosphorylated promoting ubiquitination and degradation, enabling the dimeric RELA to translocate to the nucleus and activate transcription. This Gallus gallus (Chicken) protein is NF-kappa-B inhibitor alpha (NFKBIA).